We begin with the raw amino-acid sequence, 210 residues long: Thymidylate kinase (210 aa).

Residue 14–21 (GLDRSGKS) coordinates ATP.

This sequence belongs to the thymidylate kinase family.

It carries out the reaction dTMP + ATP = dTDP + ADP. Its pathway is pyrimidine metabolism; dTTP biosynthesis. In terms of biological role, catalyzes the conversion of dTMP to dTDP. The chain is Thymidylate kinase (tmp1) from Schizosaccharomyces pombe (strain 972 / ATCC 24843) (Fission yeast).